Reading from the N-terminus, the 441-residue chain is Ribosomal protein uS12 methylthiotransferase RimO (441 aa).

The region spanning 8-118 (PKIGFVSLGC…VLEHVHHYSP (111 aa)) is the MTTase N-terminal domain. [4Fe-4S] cluster-binding residues include Cys-17, Cys-53, Cys-82, Cys-150, Cys-154, and Cys-157. The 238-residue stretch at 136-373 (LTPRHYAYLK…MQLQQQISAE (238 aa)) folds into the Radical SAM core domain. The 66-residue stretch at 376-441 (QEKVGREILV…DEYDLWGTRV (66 aa)) folds into the TRAM domain.

This sequence belongs to the methylthiotransferase family. RimO subfamily. [4Fe-4S] cluster is required as a cofactor.

It is found in the cytoplasm. The catalysed reaction is L-aspartate(89)-[ribosomal protein uS12]-hydrogen + (sulfur carrier)-SH + AH2 + 2 S-adenosyl-L-methionine = 3-methylsulfanyl-L-aspartate(89)-[ribosomal protein uS12]-hydrogen + (sulfur carrier)-H + 5'-deoxyadenosine + L-methionine + A + S-adenosyl-L-homocysteine + 2 H(+). Catalyzes the methylthiolation of an aspartic acid residue of ribosomal protein uS12. The chain is Ribosomal protein uS12 methylthiotransferase RimO from Klebsiella pneumoniae (strain 342).